A 646-amino-acid polypeptide reads, in one-letter code: Threonine--tRNA ligase (646 aa).

The TGS domain occupies Met1–Thr63. A catalytic region spans residues Asp247–Pro544. Zn(2+)-binding residues include Cys344, His395, and His521.

It belongs to the class-II aminoacyl-tRNA synthetase family. In terms of assembly, homodimer. The cofactor is Zn(2+).

The protein resides in the cytoplasm. The catalysed reaction is tRNA(Thr) + L-threonine + ATP = L-threonyl-tRNA(Thr) + AMP + diphosphate + H(+). Functionally, catalyzes the attachment of threonine to tRNA(Thr) in a two-step reaction: L-threonine is first activated by ATP to form Thr-AMP and then transferred to the acceptor end of tRNA(Thr). Also edits incorrectly charged L-seryl-tRNA(Thr). This Cereibacter sphaeroides (strain ATCC 17023 / DSM 158 / JCM 6121 / CCUG 31486 / LMG 2827 / NBRC 12203 / NCIMB 8253 / ATH 2.4.1.) (Rhodobacter sphaeroides) protein is Threonine--tRNA ligase.